Reading from the N-terminus, the 269-residue chain is Indole-3-glycerol phosphate synthase (269 aa).

This sequence belongs to the TrpC family.

It carries out the reaction 1-(2-carboxyphenylamino)-1-deoxy-D-ribulose 5-phosphate + H(+) = (1S,2R)-1-C-(indol-3-yl)glycerol 3-phosphate + CO2 + H2O. Its pathway is amino-acid biosynthesis; L-tryptophan biosynthesis; L-tryptophan from chorismate: step 4/5. The sequence is that of Indole-3-glycerol phosphate synthase from Rhodococcus jostii (strain RHA1).